A 94-amino-acid chain; its full sequence is MSNEIVDKLYKVILDRIEKRPTGSYTVEIVNKGKAYVARKVGEESVETIVASLAENKERFISEVADLIYHLLVLMALEGVTPDDIYRELERRRK.

Belongs to the PRA-PH family.

The protein resides in the cytoplasm. The enzyme catalyses 1-(5-phospho-beta-D-ribosyl)-ATP + H2O = 1-(5-phospho-beta-D-ribosyl)-5'-AMP + diphosphate + H(+). It participates in amino-acid biosynthesis; L-histidine biosynthesis; L-histidine from 5-phospho-alpha-D-ribose 1-diphosphate: step 2/9. This is Phosphoribosyl-ATP pyrophosphatase from Saccharolobus islandicus (strain M.16.27) (Sulfolobus islandicus).